The sequence spans 878 residues: Alanine--tRNA ligase (878 aa).

Positions 568, 572, 669, and 673 each coordinate Zn(2+).

Belongs to the class-II aminoacyl-tRNA synthetase family. The cofactor is Zn(2+).

Its subcellular location is the cytoplasm. It catalyses the reaction tRNA(Ala) + L-alanine + ATP = L-alanyl-tRNA(Ala) + AMP + diphosphate. In terms of biological role, catalyzes the attachment of alanine to tRNA(Ala) in a two-step reaction: alanine is first activated by ATP to form Ala-AMP and then transferred to the acceptor end of tRNA(Ala). Also edits incorrectly charged Ser-tRNA(Ala) and Gly-tRNA(Ala) via its editing domain. The polypeptide is Alanine--tRNA ligase (Polaromonas sp. (strain JS666 / ATCC BAA-500)).